Reading from the N-terminus, the 331-residue chain is Ribosomal large subunit pseudouridine synthase D (331 aa).

Residues Arg25–Asp97 enclose the S4 RNA-binding domain. Asp145 is an active-site residue.

The protein belongs to the pseudouridine synthase RluA family.

It is found in the cytoplasm. The enzyme catalyses uridine(1911/1915/1917) in 23S rRNA = pseudouridine(1911/1915/1917) in 23S rRNA. Its function is as follows. Responsible for synthesis of pseudouridine from uracil at positions 1911, 1915 and 1917 in 23S ribosomal RNA. The chain is Ribosomal large subunit pseudouridine synthase D (rluD) from Xanthomonas campestris pv. campestris (strain ATCC 33913 / DSM 3586 / NCPPB 528 / LMG 568 / P 25).